Consider the following 80-residue polypeptide: Exodeoxyribonuclease 7 small subunit (80 aa).

The protein belongs to the XseB family. In terms of assembly, heterooligomer composed of large and small subunits.

It is found in the cytoplasm. The catalysed reaction is Exonucleolytic cleavage in either 5'- to 3'- or 3'- to 5'-direction to yield nucleoside 5'-phosphates.. In terms of biological role, bidirectionally degrades single-stranded DNA into large acid-insoluble oligonucleotides, which are then degraded further into small acid-soluble oligonucleotides. The polypeptide is Exodeoxyribonuclease 7 small subunit (Enterobacter sp. (strain 638)).